The chain runs to 334 residues: Holliday junction branch migration complex subunit RuvB (334 aa).

The interval 4 to 184 (ADRLIQPQLQ…FGIPLRLEFY (181 aa)) is large ATPase domain (RuvB-L). Residues R24, G65, K68, T69, T70, 131 to 133 (EDY), R174, Y184, and R221 contribute to the ATP site. T69 is a Mg(2+) binding site. The tract at residues 185 to 255 (NVKDLSTIVT…VAEQALDLLD (71 aa)) is small ATPAse domain (RuvB-S). Residues 258 to 334 (GEGFDYMDRK…YLHFGMIKPE (77 aa)) are head domain (RuvB-H). Residues R294, R313, and R318 each coordinate DNA.

It belongs to the RuvB family. As to quaternary structure, homohexamer. Forms an RuvA(8)-RuvB(12)-Holliday junction (HJ) complex. HJ DNA is sandwiched between 2 RuvA tetramers; dsDNA enters through RuvA and exits via RuvB. An RuvB hexamer assembles on each DNA strand where it exits the tetramer. Each RuvB hexamer is contacted by two RuvA subunits (via domain III) on 2 adjacent RuvB subunits; this complex drives branch migration. In the full resolvosome a probable DNA-RuvA(4)-RuvB(12)-RuvC(2) complex forms which resolves the HJ.

It localises to the cytoplasm. The catalysed reaction is ATP + H2O = ADP + phosphate + H(+). The RuvA-RuvB-RuvC complex processes Holliday junction (HJ) DNA during genetic recombination and DNA repair, while the RuvA-RuvB complex plays an important role in the rescue of blocked DNA replication forks via replication fork reversal (RFR). RuvA specifically binds to HJ cruciform DNA, conferring on it an open structure. The RuvB hexamer acts as an ATP-dependent pump, pulling dsDNA into and through the RuvAB complex. RuvB forms 2 homohexamers on either side of HJ DNA bound by 1 or 2 RuvA tetramers; 4 subunits per hexamer contact DNA at a time. Coordinated motions by a converter formed by DNA-disengaged RuvB subunits stimulates ATP hydrolysis and nucleotide exchange. Immobilization of the converter enables RuvB to convert the ATP-contained energy into a lever motion, pulling 2 nucleotides of DNA out of the RuvA tetramer per ATP hydrolyzed, thus driving DNA branch migration. The RuvB motors rotate together with the DNA substrate, which together with the progressing nucleotide cycle form the mechanistic basis for DNA recombination by continuous HJ branch migration. Branch migration allows RuvC to scan DNA until it finds its consensus sequence, where it cleaves and resolves cruciform DNA. This Shewanella sp. (strain ANA-3) protein is Holliday junction branch migration complex subunit RuvB.